A 569-amino-acid chain; its full sequence is Urease subunit alpha (569 aa).

A Urease domain is found at 131–569; the sequence is GSIDTHIHFI…VPMAQKYFLL (439 aa). Residues H136, H138, and K219 each contribute to the Ni(2+) site. Residue K219 is modified to N6-carboxylysine. H221 contacts substrate. Ni(2+)-binding residues include H248 and H274. H322 serves as the catalytic Proton donor. D362 is a binding site for Ni(2+).

It belongs to the metallo-dependent hydrolases superfamily. Urease alpha subunit family. In terms of assembly, heterotrimer of UreA (gamma), UreB (beta) and UreC (alpha) subunits. Two heterotrimers associate to form the active enzyme. In most bacteria it is thought that three heterotrimers form the active enzyme. The cofactor is Ni cation. Post-translationally, carboxylation allows a single lysine to coordinate two nickel ions.

Its subcellular location is the cytoplasm. The enzyme catalyses urea + 2 H2O + H(+) = hydrogencarbonate + 2 NH4(+). It participates in nitrogen metabolism; urea degradation; CO(2) and NH(3) from urea (urease route): step 1/1. Inhibited by HgCl2 and acetohydroxyamic acid slightly by EDTA, but not by boric acid or L-methionine-DL-sulfoximine. This chain is Urease subunit alpha, found in Prochlorococcus marinus subsp. pastoris (strain PCC 9511).